The chain runs to 158 residues: 6,7-dimethyl-8-ribityllumazine synthase (158 aa).

5-amino-6-(D-ribitylamino)uracil contacts are provided by residues Phe-23, 61 to 63, and 85 to 87; these read SFE and AVI. 90-91 serves as a coordination point for (2S)-2-hydroxy-3-oxobutyl phosphate; that stretch reads ET. His-93 functions as the Proton donor in the catalytic mechanism. Phe-118 contributes to the 5-amino-6-(D-ribitylamino)uracil binding site. Arg-132 contributes to the (2S)-2-hydroxy-3-oxobutyl phosphate binding site.

Belongs to the DMRL synthase family.

It catalyses the reaction (2S)-2-hydroxy-3-oxobutyl phosphate + 5-amino-6-(D-ribitylamino)uracil = 6,7-dimethyl-8-(1-D-ribityl)lumazine + phosphate + 2 H2O + H(+). It functions in the pathway cofactor biosynthesis; riboflavin biosynthesis; riboflavin from 2-hydroxy-3-oxobutyl phosphate and 5-amino-6-(D-ribitylamino)uracil: step 1/2. Its function is as follows. Catalyzes the formation of 6,7-dimethyl-8-ribityllumazine by condensation of 5-amino-6-(D-ribitylamino)uracil with 3,4-dihydroxy-2-butanone 4-phosphate. This is the penultimate step in the biosynthesis of riboflavin. In Prochlorococcus marinus (strain MIT 9312), this protein is 6,7-dimethyl-8-ribityllumazine synthase.